The sequence spans 303 residues: Phosphoglycerate mutase 3 (303 aa).

Substrate contacts are provided by residues Arg-13 to Asn-20, Cys-26 to Gly-27, Arg-70, Glu-120 to Tyr-123, Lys-131, and Arg-147 to Arg-148. The active-site Tele-phosphohistidine intermediate is His-14. Catalysis depends on Glu-120, which acts as the Proton donor/acceptor. The tract at residues Asn-168–Pro-198 is disordered. Basic and acidic residues predominate over residues Asp-177–Pro-198. Gly-236–Ser-237 provides a ligand contact to substrate.

The protein belongs to the phosphoglycerate mutase family. BPG-dependent PGAM subfamily.

The catalysed reaction is (2R)-2-phosphoglycerate = (2R)-3-phosphoglycerate. It participates in carbohydrate degradation; glycolysis; pyruvate from D-glyceraldehyde 3-phosphate: step 3/5. In terms of biological role, could be non-functional. The sequence is that of Phosphoglycerate mutase 3 (GPM3) from Saccharomyces cerevisiae (strain ATCC 204508 / S288c) (Baker's yeast).